The following is a 612-amino-acid chain: BTB/POZ domain-containing protein 9 (612 aa).

Residues 36 to 104 (GDVTFVVEKK…IYTGRATLTD (69 aa)) enclose the BTB domain. In terms of domain architecture, BACK spans 142–240 (VCMTFDVASL…SLTELLNVVR (99 aa)). The disordered stretch occupies residues 560–612 (QSSQKEENSEESGTGDTSLAGQQLDSHALRAPSGSSLPSSPGSNSRSPNRQHQ). Polar residues predominate over residues 573–584 (TGDTSLAGQQLD). Low complexity predominate over residues 588-612 (LRAPSGSSLPSSPGSNSRSPNRQHQ).

In terms of tissue distribution, detected in the brain (at protein level). Moderately expressed in all specific brain regions examined. Expressed in the dopaminergic neurons of the substantia nigra and A11 neurons. Highly expressed in kidney and moderately expressed in all other adult and fetal tissues.

The protein is BTB/POZ domain-containing protein 9 (BTBD9) of Homo sapiens (Human).